The primary structure comprises 478 residues: Ankyrin repeat and BTB/POZ domain-containing protein 1 (478 aa).

ANK repeat units lie at residues 1-31 (MDTS…EVNV) and 35-64 (WDST…RCEA). BTB domains follow at residues 115 to 182 (SDVV…DIGV) and 272 to 346 (PDIC…ELSP). Residues 451–477 (VQTYSAIEEAQQRLRALEDLLVSIGLD) are a coiled coil.

Ubiquitously expressed in all fetal tissues examined including heart, brain, liver, and kidney. Also expressed at lower levels in both adult heart and hypertrophic heart.

It is found in the cytoplasm. In terms of biological role, may act as a mediator of the PTEN growth-suppressive signaling pathway. May play a role in developmental processes. This is Ankyrin repeat and BTB/POZ domain-containing protein 1 from Homo sapiens (Human).